The primary structure comprises 243 residues: MEYKINPIYRRIMLKISGEALQGTENFGVDSSILDRMVLEIKELVNIGVQIGMIIGGGNLFRGSRLVQFGMNKVIGDHIGMLATIMNGLVMHNALHRVYVDSSVMSAIPLQGVCDNYNWMRAIDLLSNNKVVIFGAGTGNPFFTTDSAACLRGIEISANAVFKATKVDGVFAHDPIQYPNHNIALYEQLSYQDVLQRELKVMDLTAFALARDHNLPIHIFNINKVGALKRIIMGYREGTVITK.

15 to 18 provides a ligand contact to ATP; it reads KISG. UMP is bound at residue Gly-57. Gly-58 and Arg-62 together coordinate ATP. UMP contacts are provided by residues Asp-77 and 138-145; that span reads TGNPFFTT. Residues Thr-165, Phe-171, and Asp-174 each coordinate ATP.

It belongs to the UMP kinase family. In terms of assembly, homohexamer.

It localises to the cytoplasm. It carries out the reaction UMP + ATP = UDP + ADP. Its pathway is pyrimidine metabolism; CTP biosynthesis via de novo pathway; UDP from UMP (UMPK route): step 1/1. Its activity is regulated as follows. Inhibited by UTP. Catalyzes the reversible phosphorylation of UMP to UDP. The chain is Uridylate kinase from Blochmanniella floridana.